Here is a 427-residue protein sequence, read N- to C-terminus: Nucleolar and spindle-associated protein 1 (427 aa).

The disordered stretch occupies residues 41 to 190 (AHLNPETRKE…LGNNKRTSAT (150 aa)). Basic and acidic residues predominate over residues 43-55 (LNPETRKENKNQD). Residues 83–96 (TKTRRRRRKKHKTI) are compositionally biased toward basic residues. Low complexity predominate over residues 119-128 (NFQNQENQEN). Ser-139 carries the post-translational modification Phosphoserine. Residues 159–179 (NDIKDSKKPLEKRSLCTDEFS) show a composition bias toward basic and acidic residues. Over residues 181–190 (LGNNKRTSAT) the composition is skewed to polar residues. Thr-191 carries the post-translational modification Phosphothreonine. The interval 235 to 312 (IVTPVPPRGR…QAVFRTPKSK (78 aa)) is disordered. An interaction with microtubules region spans residues 243–367 (GRLSVPCTPA…HKGKLKPWGQ (125 aa)). A Phosphoserine modification is found at Ser-246. Thr-250 carries the post-translational modification Phosphothreonine. Over residues 252-264 (ARQQCPQGHSATK) the composition is skewed to polar residues. Ser-261 carries the phosphoserine modification. Thr-323 and Thr-334 each carry phosphothreonine. Phosphoserine is present on residues Ser-337 and Ser-348. The tract at residues 354–427 (NYKPHKGKLK…RRNLGVTKAQ (74 aa)) is disordered. Residues 369 to 375 (KENNSLN) carry the KEN box motif. Residues 393–425 (LQTREERWKRQEQERKEKKEKLLEARRNLGVTK) are a coiled coil. Residues 394 to 419 (QTREERWKRQEQERKEKKEKLLEARR) are compositionally biased toward basic and acidic residues.

It belongs to the NUSAP family. In terms of assembly, interacts with DNA and microtubules. Microtubule bundling is inhibited by IPO7, KPNA2 and KPNB1 while association with DNA is also inhibited by IPO7 and KPNA2. Ubiquitinated. Ubiquitination by FZR1 may lead to proteasome-dependent degradation of this protein.

The protein resides in the cytoplasm. It localises to the nucleus. Its subcellular location is the nucleolus. It is found in the cytoskeleton. The protein localises to the spindle. The protein resides in the chromosome. In terms of biological role, microtubule-associated protein with the capacity to bundle and stabilize microtubules. May associate with chromosomes and promote the organization of mitotic spindle microtubules around them. This is Nucleolar and spindle-associated protein 1 (Nusap1) from Mus musculus (Mouse).